The chain runs to 211 residues: Formate dehydrogenase, cytochrome b556(fdo) subunit (211 aa).

The Cytoplasmic portion of the chain corresponds to 1-17 (MKRRDTIVRYTAPERIN). Position 18 (His-18) interacts with heme b. Residues 18 to 32 (HWITAFCFILAAVSG) form a helical membrane-spanning segment. The Periplasmic portion of the chain corresponds to 33-53 (LGFLFPSFNWLMQIMGTPQLA). Residues 54 to 72 (RILHPFVGVVMFASFIIMF) form a helical membrane-spanning segment. His-57 lines the heme b pocket. The Cytoplasmic portion of the chain corresponds to 73-112 (FRYWHHNLINRDDIFWAKNIRKIVVNEEVGDTGRYNFGQK). The chain crosses the membrane as a helical span at residues 113 to 130 (CVFWAAIIFLVLLLVSGV). Topologically, residues 131–151 (IIWRPYFAPAFSIPVIRFALM) are periplasmic. A helical transmembrane segment spans residues 152–170 (LHSFAAVALIVVIMVHIYA). Positions 153 and 167 each coordinate heme b. At 171–211 (ALWVKGTITAMVEGWVTSAWAKKHHPRWYREVRKTTEKKAE) the chain is on the cytoplasmic side.

This sequence belongs to the formate dehydrogenase gamma subunit family. In terms of assembly, formate dehydrogenase is a membrane-bound complex, formed by subunits alpha, beta and gamma. It depends on heme as a cofactor.

It localises to the cell inner membrane. In terms of biological role, allows to use formate as major electron donor during aerobic respiration. Subunit gamma is probably the cytochrome b556(FDO) component of the formate dehydrogenase. This Escherichia coli O157:H7 protein is Formate dehydrogenase, cytochrome b556(fdo) subunit (fdoI).